Here is a 200-residue protein sequence, read N- to C-terminus: Glycerol-3-phosphate acyltransferase (200 aa).

The next 5 membrane-spanning stretches (helical) occupy residues 2 to 22 (FNIP…AVIV), 51 to 71 (KAAA…VLLA), 84 to 104 (AIAA…FFGF), 114 to 134 (LGVL…IWLV), and 159 to 179 (FFMP…LVLF).

It belongs to the PlsY family. In terms of assembly, probably interacts with PlsX.

Its subcellular location is the cell inner membrane. It carries out the reaction an acyl phosphate + sn-glycerol 3-phosphate = a 1-acyl-sn-glycero-3-phosphate + phosphate. Its pathway is lipid metabolism; phospholipid metabolism. Functionally, catalyzes the transfer of an acyl group from acyl-phosphate (acyl-PO(4)) to glycerol-3-phosphate (G3P) to form lysophosphatidic acid (LPA). This enzyme utilizes acyl-phosphate as fatty acyl donor, but not acyl-CoA or acyl-ACP. This Neisseria meningitidis serogroup B (strain ATCC BAA-335 / MC58) protein is Glycerol-3-phosphate acyltransferase.